Here is a 354-residue protein sequence, read N- to C-terminus: Protein-arginine kinase (354 aa).

The Phosphagen kinase C-terminal domain occupies 24 to 254; sequence IVLSSRIRLA…QQIIQQEKMA (231 aa). ATP is bound by residues 27 to 31, His92, Arg125, 176 to 180, and 207 to 212; these read SSRIR, RASVM, and RGIYGE. The RDXXRA motif of the pArg binding pocket involved in allosteric regulation signature appears at 337–342; it reads RDYRRA.

It belongs to the ATP:guanido phosphotransferase family.

It carries out the reaction L-arginyl-[protein] + ATP = N(omega)-phospho-L-arginyl-[protein] + ADP + H(+). With respect to regulation, appears to be allosterically activated by the binding of pArg-containing polypeptides to the pArg-binding pocket localized in the C-terminal domain of McsB. Functionally, catalyzes the specific phosphorylation of arginine residues in a large number of proteins. Is part of the bacterial stress response system. Protein arginine phosphorylation has a physiologically important role and is involved in the regulation of many critical cellular processes, such as protein homeostasis, motility, competence, and stringent and stress responses, by regulating gene expression and protein activity. The polypeptide is Protein-arginine kinase (Bacillus cereus (strain ATCC 10987 / NRS 248)).